The following is a 905-amino-acid chain: Alanine--tRNA ligase (905 aa).

Residues His582, His586, Cys687, and His691 each contribute to the Zn(2+) site.

This sequence belongs to the class-II aminoacyl-tRNA synthetase family. Zn(2+) serves as cofactor.

The protein localises to the cytoplasm. The catalysed reaction is tRNA(Ala) + L-alanine + ATP = L-alanyl-tRNA(Ala) + AMP + diphosphate. In terms of biological role, catalyzes the attachment of alanine to tRNA(Ala) in a two-step reaction: alanine is first activated by ATP to form Ala-AMP and then transferred to the acceptor end of tRNA(Ala). Also edits incorrectly charged Ser-tRNA(Ala) and Gly-tRNA(Ala) via its editing domain. In Mycoplasma mobile (strain ATCC 43663 / 163K / NCTC 11711) (Mesomycoplasma mobile), this protein is Alanine--tRNA ligase.